The chain runs to 609 residues: Alpha-fetoprotein (609 aa).

An N-terminal signal peptide occupies residues 1–18; that stretch reads MKWVESIFLIFLLNFTES. Albumin domains follow at residues 19 to 210, 211 to 402, and 403 to 601; these read RTLH…ATVT, KELR…EELQ, and KYIQ…KLIS. A Cu(2+)-binding site is contributed by His22. 8 disulfides stabilise this stretch: Cys99/Cys114, Cys113/Cys124, Cys148/Cys193, Cys192/Cys201, Cys224/Cys270, Cys269/Cys277, Cys289/Cys303, and Cys302/Cys313. Phosphoserine; by FAM20C occurs at positions 111, 115, and 117. N-linked (GlcNAc...) asparagine glycosylation is present at Asn251. Ser344 is subject to Phosphoserine; by FAM20C. Disulfide bonds link Cys384-Cys393, Cys416-Cys462, Cys461-Cys472, Cys485-Cys501, Cys500-Cys511, Cys538-Cys583, and Cys582-Cys591. 2 positions are modified to phosphoserine; by FAM20C: Ser444 and Ser445.

The protein belongs to the ALB/AFP/VDB family. As to quaternary structure, dimeric and trimeric forms have been found in addition to the monomeric form. Independent studies suggest heterogeneity of the N-terminal sequence of the mature protein and of the cleavage site of the signal sequence. In terms of processing, sulfated. In terms of tissue distribution, plasma. Synthesized by the fetal liver and yolk sac.

The protein resides in the secreted. In terms of biological role, binds copper, nickel, and fatty acids as well as, and bilirubin less well than, serum albumin. Only a small percentage (less than 2%) of the human AFP shows estrogen-binding properties. This chain is Alpha-fetoprotein (AFP), found in Homo sapiens (Human).